Here is a 225-residue protein sequence, read N- to C-terminus: Methylthioribulose-1-phosphate dehydratase (225 aa).

Residues histidine 106 and histidine 108 each coordinate Zn(2+).

This sequence belongs to the aldolase class II family. MtnB subfamily. Zn(2+) is required as a cofactor.

It carries out the reaction 5-(methylsulfanyl)-D-ribulose 1-phosphate = 5-methylsulfanyl-2,3-dioxopentyl phosphate + H2O. Its pathway is amino-acid biosynthesis; L-methionine biosynthesis via salvage pathway; L-methionine from S-methyl-5-thio-alpha-D-ribose 1-phosphate: step 2/6. In terms of biological role, catalyzes the dehydration of methylthioribulose-1-phosphate (MTRu-1-P) into 2,3-diketo-5-methylthiopentyl-1-phosphate (DK-MTP-1-P). This chain is Methylthioribulose-1-phosphate dehydratase, found in Xanthomonas oryzae pv. oryzae (strain KACC10331 / KXO85).